Here is a 152-residue protein sequence, read N- to C-terminus: Xanthine-guanine phosphoribosyltransferase (152 aa).

5-phospho-alpha-D-ribose 1-diphosphate-binding positions include 37–38 (RG), arginine 69, and 88–96 (DDLVDTGGT). Residue arginine 69 coordinates GMP. Aspartate 89 is a binding site for Mg(2+). Residues aspartate 92 and isoleucine 135 each coordinate guanine. The xanthine site is built by aspartate 92 and isoleucine 135. Residues 92 to 96 (DTGGT) and 134 to 135 (WI) contribute to the GMP site.

This sequence belongs to the purine/pyrimidine phosphoribosyltransferase family. XGPT subfamily. In terms of assembly, homotetramer. Mg(2+) is required as a cofactor.

Its subcellular location is the cell inner membrane. The enzyme catalyses GMP + diphosphate = guanine + 5-phospho-alpha-D-ribose 1-diphosphate. It carries out the reaction XMP + diphosphate = xanthine + 5-phospho-alpha-D-ribose 1-diphosphate. It catalyses the reaction IMP + diphosphate = hypoxanthine + 5-phospho-alpha-D-ribose 1-diphosphate. It participates in purine metabolism; GMP biosynthesis via salvage pathway; GMP from guanine: step 1/1. Its pathway is purine metabolism; XMP biosynthesis via salvage pathway; XMP from xanthine: step 1/1. Its function is as follows. Purine salvage pathway enzyme that catalyzes the transfer of the ribosyl-5-phosphate group from 5-phospho-alpha-D-ribose 1-diphosphate (PRPP) to the N9 position of the 6-oxopurines guanine and xanthine to form the corresponding ribonucleotides GMP (guanosine 5'-monophosphate) and XMP (xanthosine 5'-monophosphate), with the release of PPi. To a lesser extent, also acts on hypoxanthine. This is Xanthine-guanine phosphoribosyltransferase from Escherichia coli O7:K1 (strain IAI39 / ExPEC).